The sequence spans 148 residues: UPF0756 membrane protein YeaL (148 aa).

The next 4 membrane-spanning stretches (helical) occupy residues 14–34, 51–71, 86–106, and 121–141; these read ALGF…LIIV, LSIG…SGTL, LVAI…VTLM, and VLGV…AGLV.

Belongs to the UPF0756 family.

Its subcellular location is the cell membrane. This is UPF0756 membrane protein YeaL from Escherichia coli O127:H6 (strain E2348/69 / EPEC).